The sequence spans 52 residues: ATP synthase protein 8 (52 aa).

The chain crosses the membrane as a helical span at residues 7–23 (MMWFSLFIMFSMTMMLF).

The protein belongs to the ATPase protein 8 family. F-type ATPases have 2 components, CF(1) - the catalytic core - and CF(0) - the membrane proton channel.

Its subcellular location is the mitochondrion membrane. In terms of biological role, mitochondrial membrane ATP synthase (F(1)F(0) ATP synthase or Complex V) produces ATP from ADP in the presence of a proton gradient across the membrane which is generated by electron transport complexes of the respiratory chain. F-type ATPases consist of two structural domains, F(1) - containing the extramembraneous catalytic core and F(0) - containing the membrane proton channel, linked together by a central stalk and a peripheral stalk. During catalysis, ATP synthesis in the catalytic domain of F(1) is coupled via a rotary mechanism of the central stalk subunits to proton translocation. Part of the complex F(0) domain. Minor subunit located with subunit a in the membrane. The sequence is that of ATP synthase protein 8 (MT-ATP8) from Locusta migratoria (Migratory locust).